Consider the following 686-residue polypeptide: Cadmium, zinc and cobalt-transporting ATPase (686 aa).

The HMA domain maps to 1–62 (MQEYHIHNLD…FIKQNEPHLS (62 aa)). Residues 1–72 (MQEYHIHNLD…LSFKEATEKP (72 aa)) lie on the Cytoplasmic side of the membrane. Positions 11 and 14 each coordinate Cd(2+). Co(2+) is bound by residues C11 and C14. Zn(2+) is bound by residues C11 and C14. A helical transmembrane segment spans residues 73–92 (LSFTPLIITIMVFLGAILIL). Topologically, residues 93–102 (HLNPSPLIEK) are extracellular. The chain crosses the membrane as a helical span at residues 103 to 124 (AMFFVLALVYLVSGKDVILGAF). Topologically, residues 125-131 (RGLRKGQ) are cytoplasmic. The helical transmembrane segment at 132-151 (FFDENALMLIATIAAFFVGA) threads the bilayer. Topologically, residues 152–154 (YEE) are extracellular. A helical transmembrane segment spans residues 155-174 (SVSIMVFYSAGEFLQKLAVS). Residues 175 to 308 (RSKKSLKALV…ITKFSRYYTP (134 aa)) are Cytoplasmic-facing. Residues 309-327 (SVLFIALMIAVLPPLFSMG) form a helical membrane-spanning segment. The Extracellular portion of the chain corresponds to 328–332 (SFDEW). The chain crosses the membrane as a helical span at residues 333 to 350 (IYRGLVALMVSCPCALVI). Residues 351–635 (SVPLGYFGGV…VLAIAKKTKS (285 aa)) are Cytoplasmic-facing. The active-site 4-aspartylphosphate intermediate is D388. Residues D583 and D587 each contribute to the Mg(2+) site. The chain crosses the membrane as a helical span at residues 636–657 (IIWQNILFALGIKAVFIVLGLM). The Extracellular portion of the chain corresponds to 658 to 665 (GVASLWEA). The chain crosses the membrane as a helical span at residues 666–681 (VFGDVGVTLLALANSM). The Cytoplasmic segment spans residues 682–686 (RAMRA).

It belongs to the cation transport ATPase (P-type) (TC 3.A.3) family. Type IB subfamily.

Its subcellular location is the cell membrane. It catalyses the reaction Zn(2+)(in) + ATP + H2O = Zn(2+)(out) + ADP + phosphate + H(+). The catalysed reaction is Cd(2+)(in) + ATP + H2O = Cd(2+)(out) + ADP + phosphate + H(+). In terms of biological role, couples the hydrolysis of ATP with the transport of cadmium, zinc and cobalt out of the cell. This ion efflux may influence the activity of urease, which is essential for the survival of the bacterium in the gastric environment. In Helicobacter pylori (strain ATCC 700392 / 26695) (Campylobacter pylori), this protein is Cadmium, zinc and cobalt-transporting ATPase (cadA).